The sequence spans 299 residues: 4-hydroxybenzoate octaprenyltransferase (299 aa).

7 helical membrane passes run 34–54 (IGSL…ADGL), 57–77 (LWTL…GCVI), 108–128 (LWVF…LNWL), 163–183 (WGIP…GWLL), 221–241 (FDLV…ALVD), 245–265 (DLGA…AYEF), and 277–297 (FRAF…IAVA).

The protein belongs to the UbiA prenyltransferase family. Mg(2+) is required as a cofactor.

The protein localises to the cell inner membrane. The catalysed reaction is all-trans-octaprenyl diphosphate + 4-hydroxybenzoate = 4-hydroxy-3-(all-trans-octaprenyl)benzoate + diphosphate. It functions in the pathway cofactor biosynthesis; ubiquinone biosynthesis. Functionally, catalyzes the prenylation of para-hydroxybenzoate (PHB) with an all-trans polyprenyl group. Mediates the second step in the final reaction sequence of ubiquinone-8 (UQ-8) biosynthesis, which is the condensation of the polyisoprenoid side chain with PHB, generating the first membrane-bound Q intermediate 3-octaprenyl-4-hydroxybenzoate. The chain is 4-hydroxybenzoate octaprenyltransferase from Xanthomonas oryzae pv. oryzae (strain MAFF 311018).